Here is a 151-residue protein sequence, read N- to C-terminus: Arginine repressor (151 aa).

This sequence belongs to the ArgR family.

It is found in the cytoplasm. The protein operates within amino-acid biosynthesis; L-arginine biosynthesis [regulation]. In terms of biological role, regulates arginine biosynthesis genes. This is Arginine repressor from Haemophilus influenzae (strain PittGG).